Consider the following 67-residue polypeptide: DNA-directed RNA polymerase subunit omega (67 aa).

The protein belongs to the RNA polymerase subunit omega family. In terms of assembly, the RNAP catalytic core consists of 2 alpha, 1 beta, 1 beta' and 1 omega subunit. When a sigma factor is associated with the core the holoenzyme is formed, which can initiate transcription.

The enzyme catalyses RNA(n) + a ribonucleoside 5'-triphosphate = RNA(n+1) + diphosphate. Functionally, promotes RNA polymerase assembly. Latches the N- and C-terminal regions of the beta' subunit thereby facilitating its interaction with the beta and alpha subunits. This Albidiferax ferrireducens (strain ATCC BAA-621 / DSM 15236 / T118) (Rhodoferax ferrireducens) protein is DNA-directed RNA polymerase subunit omega.